The primary structure comprises 880 residues: Interference hedgehog (880 aa).

The signal sequence occupies residues 1 to 20; the sequence is MTLLTSSLLLFSLLTSRLEA. Topologically, residues 21-703 are extracellular; the sequence is IPVLEKSPAH…ETFNMSPMLT (683 aa). 4 consecutive Ig-like C2-type domains span residues 45–142, 132–232, 252–340, and 346–432; these read PGVR…TARL, PLVV…ERIQ, PHLL…YIKV, and PQIV…LQVN. 4 disulfide bridges follow: Cys68/Cys126, Cys173/Cys220, Cys276/Cys324, and Cys367/Cys414. Residues Asn102 and Asn209 are each glycosylated (N-linked (GlcNAc...) asparagine). Residues 426–467 form a disordered region; that stretch reads GTLLQVNPKQIQEPRESGGTHRPKPNQGSKQKQMYPPTPPNV. Fibronectin type-III domains lie at 461–567 and 575–670; these read PPTP…LQPG and VPEL…TQRP. N-linked (GlcNAc...) asparagine glycosylation is present at Asn466. The heparin site is built by Arg497, Lys501, Lys503, and Arg541. Residue Asn557 is glycosylated (N-linked (GlcNAc...) asparagine). Residues 662 to 697 are disordered; sequence LKQGRTQRPKTSTTEEPTLQMGDRDTTTPSHNETFN. 2 stretches are compositionally biased toward polar residues: residues 665–678 and 688–697; these read GRTQRPKTSTTEEP and TTPSHNETFN. A glycan (N-linked (GlcNAc...) asparagine) is linked at Asn693. Residues 704-724 form a helical membrane-spanning segment; sequence GTIGGGAVLILLLISTCLCVC. The Cytoplasmic segment spans residues 725–880; it reads RRRTSRSRGN…SSGSLNSVGV (156 aa). 2 disordered regions span residues 728–762 and 775–880; these read TSRSRGNNPNKPRMAELRDDFVPLGNCSPTKQRQR and QQQQ…SVGV. Composition is skewed to low complexity over residues 823-837 and 864-880; these read RAGGSNGSNNGNNNN and SSRSENLSSGSLNSVGV.

Belongs to the immunoglobulin superfamily. IHOG family. Homodimer. Heterotetramer; 2 iHog chains bind 2 hh chains when facilitated by heparin, heparin is required to promote high-affinity interactions between hh and iHog.

It localises to the membrane. Its function is as follows. Mediates response to the active Hedgehog (Hh) protein signal in embryos, functioning upstream or at the level of patched (ptc). The sequence is that of Interference hedgehog from Drosophila sechellia (Fruit fly).